The following is a 423-amino-acid chain: Endochitinase 1 (423 aa).

Positions 1–22 (MPSLFAQSLAIIATLQATLGLA) are cleaved as a signal peptide. A GH18 domain is found at 39–401 (YVNAVYFTNW…GTSSNKLGGP (363 aa)). 3 N-linked (GlcNAc...) asparagine glycosylation sites follow: asparagine 74, asparagine 78, and asparagine 96. Residues 103–104 (GT) and 130–133 (GGWT) each bind chitin. Residue glutamate 172 is the Proton donor of the active site. Residues tyrosine 173 and 238–241 (MAYD) contribute to the chitin site. A glycan (N-linked (GlcNAc...) asparagine) is linked at asparagine 248. Tryptophan 378 serves as a coordination point for chitin. Positions 380–423 (ASSDRSGSQSLIGTSSNKLGGPDSTENLLNYPDSKYDNMRKQMA) are disordered. Residues 383 to 407 (DRSGSQSLIGTSSNKLGGPDSTENL) are compositionally biased toward polar residues. A compositionally biased stretch (basic and acidic residues) spans 413–423 (SKYDNMRKQMA).

The protein belongs to the glycosyl hydrolase 18 family. Chitinase class V subfamily.

The protein localises to the secreted. The enzyme catalyses Random endo-hydrolysis of N-acetyl-beta-D-glucosaminide (1-&gt;4)-beta-linkages in chitin and chitodextrins.. Secreted chitinase involved in the degradation of chitin, a component of the cell walls of fungi and exoskeletal elements of some animals (including worms and arthropods). Participates in the infection process and directly acts in the penetration process of the host cuticle. In Metarhizium anisopliae (Entomophthora anisopliae), this protein is Endochitinase 1 (chit1).